The sequence spans 539 residues: Glutamyl-tRNA(Gln) amidotransferase subunit A, mitochondrial (539 aa).

Active-site charge relay system residues include K94 and S181. S205 acts as the Acyl-ester intermediate in catalysis.

It belongs to the amidase family. GatA subfamily. As to quaternary structure, subunit of the heterotrimeric GatCAB amidotransferase (AdT) complex, composed of A, B and C subunits.

Its subcellular location is the mitochondrion. The catalysed reaction is L-glutamyl-tRNA(Gln) + L-glutamine + ATP + H2O = L-glutaminyl-tRNA(Gln) + L-glutamate + ADP + phosphate + H(+). Its function is as follows. Allows the formation of correctly charged Gln-tRNA(Gln) through the transamidation of misacylated Glu-tRNA(Gln) in the mitochondria. The reaction takes place in the presence of glutamine and ATP through an activated gamma-phospho-Glu-tRNA(Gln). This is Glutamyl-tRNA(Gln) amidotransferase subunit A, mitochondrial from Mycosarcoma maydis (Corn smut fungus).